We begin with the raw amino-acid sequence, 121 residues long: MLNRRECGAAVEVAARRHLERAGLRWLASNVCFRGGELDLVMYDVMSVVFVEVRYRQQENHGSAAQSVDRRKRRKLVMAAQLFLQRHPFLAQVPCRFDVVEGAGRPLQLHWIRDAFRLDDC.

This sequence belongs to the UPF0102 family.

The chain is UPF0102 protein XF_0554 from Xylella fastidiosa (strain 9a5c).